A 250-amino-acid chain; its full sequence is Troponin I 1 (250 aa).

Disordered stretches follow at residues 1–59 (MSQI…ERKK) and 194–250 (SVFT…ADEE). 2 stretches are compositionally biased toward basic and acidic residues: residues 21 to 45 (DAQR…EAGQ) and 206 to 221 (DKPE…KEES). Over residues 229 to 250 (PVEEEETAASEGEEEEEEADEE) the composition is skewed to acidic residues.

The protein belongs to the troponin I family. As to expression, strongly expressed in body wall muscle during embryogenesis, reduces during the larval stages to adult. In late-stage larvae and adults, expression is evident in the proximal gonad of both hermaphrodites and males.

Its function is as follows. Troponin I is the inhibitory subunit of troponin, the thin filament regulatory complex which confers calcium-sensitivity to muscle actomyosin ATPase activity. This Caenorhabditis elegans protein is Troponin I 1 (tni-1).